Reading from the N-terminus, the 231-residue chain is Ribose-5-phosphate isomerase A (231 aa).

Substrate contacts are provided by residues serine 23–threonine 26, aspartate 80–aspartate 83, and lysine 93–glycine 96. Catalysis depends on glutamate 102, which acts as the Proton acceptor. Lysine 120 is a binding site for substrate.

The protein belongs to the ribose 5-phosphate isomerase family. In terms of assembly, homodimer.

It catalyses the reaction aldehydo-D-ribose 5-phosphate = D-ribulose 5-phosphate. It participates in carbohydrate degradation; pentose phosphate pathway; D-ribose 5-phosphate from D-ribulose 5-phosphate (non-oxidative stage): step 1/1. Functionally, catalyzes the reversible conversion of ribose-5-phosphate to ribulose 5-phosphate. In Prochlorococcus marinus subsp. pastoris (strain CCMP1986 / NIES-2087 / MED4), this protein is Ribose-5-phosphate isomerase A.